We begin with the raw amino-acid sequence, 1012 residues long: MNRIFKSIWCEQTRTWVAASEHAVARGGRASSVVASAGGLEKVLKLSILGAASLIAMGVVGPFAEEAMAANNAGVCLTYNGSSNNTSGTGGWFADGCKSAGWVQGMVTNSKTDWVGLTADDTQIVLDGSAGSIYFRTGGINGNVLTMSNATGGVLLSGLAAGVNPTDAVNMSQLTSLSTSTATGITSLSTSTATSIASLSTSMLSLGVGVVTQDASSGAISVGANSPGLTVDFAGGQGPRTLTGVAAGVNATDAVNVGQLASLSTSTAAGLSTAASGVASLSTSLLGAAGDLASLSTSASTGLATADSGIASLSTSLLGTADNVTSLSTSLSTVNANLAGLQTSVDNVVSYDDPSKSAITLGGAGVATPVLLTNVAAGKIAATSTDAVNGSQLYTLQQEFSQQYDLLTSQVSSLSTSVSGLQGSVSANTGTASGDNSTASGDNATASGTNSTANGTNSTASGDNSTASGTNASASGENSTATGTDSTASGSNSTANGTNSTASGDNSTASGTNASATGENSTATGTDSTASGSNSTANGTNSTASGDSSTASGTNASATGENSTATGTDSTASGSNSTANGTNSTASGDNSTASGTNASATGENSTATGTDSTASGSNSTANGTNSTASGDNSTASGTNASATGENSTATGTDSTASGSNSTANGANSTASGENSTATGTDSTASGSNSTANGTNSTASGDNSTASGTNASATGENSTATGTASTASGSNSTANGANSTASGAGATATGENAAATGAGATATGNNASASGTSSTAGGANAIASGENSTANGANSTASGNGSSAFGESAAAAGDGSTALGANAVASGVGSVATGAGSVASGANSSAYGTGSNATGAGSVAIGQGATASGSNSVALGTGSVASEDNTVSVGSAGSERRITNVAAGVNATDAVNVGQLNSAVSGIRNQMDGMQGQIDTLARDAYSGIAAATALTMIPDVDPGKTLAVGIGTANFKGYQASALGATARITQNLKVKTGVSYSGSNYVWGAGMSYQW.

The first 71 residues, 1-71 (MNRIFKSIWC…PFAEEAMAAN (71 aa)), serve as a signal peptide directing secretion. The interval 72-921 (NAGVCLTYNG…VGQLNSAVSG (850 aa)) is surface exposed passenger domain. Disordered regions lie at residues 420-746 (GLQG…AGAT) and 785-809 (ENST…ESAA). Residues 427–442 (ANTGTASGDNSTASGD) show a composition bias toward polar residues. Low complexity predominate over residues 443-504 (NATASGTNST…ANGTNSTASG (62 aa)). Residues 505–519 (DNSTASGTNASATGE) show a composition bias toward polar residues. Over residues 520 to 588 (NSTATGTDST…ANGTNSTASG (69 aa)) the composition is skewed to low complexity. A compositionally biased stretch (polar residues) spans 589–603 (DNSTASGTNASATGE). The span at 604–630 (NSTATGTDSTASGSNSTANGTNSTASG) shows a compositional bias: low complexity. The span at 631 to 645 (DNSTASGTNASATGE) shows a compositional bias: polar residues. Low complexity-rich tracts occupy residues 646–700 (NSTA…TASG) and 708–746 (TNAS…AGAT). An outer membrane translocation of the passenger domain region spans residues 922–959 (IRNQMDGMQGQIDTLARDAYSGIAAATALTMIPDVDPG). The interval 960-1012 (KTLAVGIGTANFKGYQASALGATARITQNLKVKTGVSYSGSNYVWGAGMSYQW) is translocator domain.

This sequence belongs to the autotransporter-2 (AT-2) (TC 1.B.40) family. In terms of assembly, homotrimer.

The protein resides in the cell surface. The protein localises to the cell outer membrane. Involved in virulence. Mediates adherence to human respiratory epithelial cells. This is Autotransporter adhesin BpaC from Burkholderia mallei (strain ATCC 23344).